The following is an 86-amino-acid chain: Large ribosomal subunit protein bL27 (86 aa).

Residues 1-26 (MATKKAGGSSRNGRDSAGRRLGVKKS) form a disordered region.

The protein belongs to the bacterial ribosomal protein bL27 family.

In Rickettsia akari (strain Hartford), this protein is Large ribosomal subunit protein bL27.